Here is a 600-residue protein sequence, read N- to C-terminus: Mediator of RNA polymerase II transcription subunit 26 (600 aa).

Residues 10–87 enclose the TFIIS N-terminal domain; sequence QIRDRLLQAI…RSWQKLIEPA (78 aa). 3 disordered regions span residues 99-330, 348-402, and 431-461; these read GATG…RRLE, HQRL…PRDY, and TRQIKPLTQKEPVRADSPVHMEQQSRTELDK. The span at 123-133 shows a compositional bias: basic and acidic residues; the sequence is SIHDLKSRNDL. The segment covering 175-197 has biased composition (polar residues); the sequence is PNSSPLPTNGISGSPESFASSLD. Positions 207–218 are enriched in basic and acidic residues; that stretch reads SRLERDENDKHS. Residues 314–324 show a composition bias toward pro residues; the sequence is SPLPLAQPSTP. The segment covering 441–461 has biased composition (basic and acidic residues); the sequence is EPVRADSPVHMEQQSRTELDK. 3 positions are modified to phosphoserine: S447, S470, and S535.

This sequence belongs to the Mediator complex subunit 26 family. In terms of assembly, component of the Mediator complex, which is composed of MED1, MED4, MED6, MED7, MED8, MED9, MED10, MED11, MED12, MED13, MED13L, MED14, MED15, MED16, MED17, MED18, MED19, MED20, MED21, MED22, MED23, MED24, MED25, MED26, MED27, MED29, MED30, MED31, CCNC, CDK8 and CDC2L6/CDK11. The MED12, MED13, CCNC and CDK8 subunits form a distinct module termed the CDK8 module. Mediator containing the CDK8 module is less active than Mediator lacking this module in supporting transcriptional activation. Individual preparations of the Mediator complex lacking one or more distinct subunits have been variously termed ARC, CRSP, DRIP, PC2, SMCC and TRAP. Interacts with CEBPB (when not methylated).

Its subcellular location is the nucleus. Component of the Mediator complex, a coactivator involved in the regulated transcription of nearly all RNA polymerase II-dependent genes. Mediator functions as a bridge to convey information from gene-specific regulatory proteins to the basal RNA polymerase II transcription machinery. Mediator is recruited to promoters by direct interactions with regulatory proteins and serves as a scaffold for the assembly of a functional pre-initiation complex with RNA polymerase II and the general transcription factors. The protein is Mediator of RNA polymerase II transcription subunit 26 (MED26) of Homo sapiens (Human).